Consider the following 141-residue polypeptide: Antifungal protein ginkbilobin-like protein 1 (141 aa).

Residues 1–32 form the signal peptide; the sequence is MSISSKFQLRSSTSLLLLVALMVVMGMDGAAA. Residues 36-141 enclose the Gnk2-homologous domain; that stretch reads TNFVSSACNT…CFIQYEQHSF (106 aa). Intrachain disulfides connect cysteine 43-cysteine 119, cysteine 95-cysteine 104, and cysteine 107-cysteine 132. Asparagine 44 serves as a coordination point for alpha-D-mannopyranose. Positions 126 and 137 each coordinate alpha-D-mannopyranose.

Exerts antifungal activity through its carbohydrate-binding specificity. The chain is Antifungal protein ginkbilobin-like protein 1 from Picea glauca (White spruce).